The chain runs to 388 residues: Aldolase vrtJ (388 aa).

Position 241 is an N6-(pyridoxal phosphate)lysine (K241).

Belongs to the threonine aldolase family. Requires pyridoxal 5'-phosphate as cofactor.

The protein operates within secondary metabolite biosynthesis; terpenoid biosynthesis. Aldolase; part of the gene cluster that mediates the biosynthesis of viridicatumtoxin, a tetracycline-like fungal meroterpenoid with a unique, fused spirobicyclic ring system. The first step of the pathway is the production of the malonamoyl-CoA starter unit for the polyketide synthase vrtA. The aldolase vrtJ may be involved in the synthesis of the malonamate substrate for malonamoyl-CoA synthetase vrtB. The polyketide synthase vrtA then may utilize the malonamoyl-CoA starter unit, followed by sequential condensation of eight malonyl-CoA units to form the polyketide backbone. The cyclization of the last ring could be mediated by the lactamase-like protein vrtG. The proposed post-PKS tailoring steps are a hydroxylation at C5 catalyzed the cytochrome P450 monooxygenase vrtE, a hydroxylation at C12a catalyzed by VrtH and/or VrtI, and an O-methylation by the O-methyltransferase vrtF. VrtC is then proposed to catalyze the transfer of a geranyl group synthesized by vrtD to the aromatic C ring of the tetracyclic polyketide intermediate of viridicatumtoxin to yield previridicatumtoxin. Finally, the cytochrome P450 monooxygenase vrtK catalyzes the spirocyclization of the geranyl moiety of previridicatumtoxin to afford viridicatumtoxin. The sequence is that of Aldolase vrtJ from Penicillium aethiopicum.